Reading from the N-terminus, the 154-residue chain is Myoglobin (154 aa).

One can recognise a Globin domain in the interval Gly2–Lys148. His65 is a nitrite binding site. An O2-binding site is contributed by His65. Residue His94 participates in heme b binding.

It belongs to the globin family. As to quaternary structure, monomeric.

Its subcellular location is the cytoplasm. It localises to the sarcoplasm. The enzyme catalyses Fe(III)-heme b-[protein] + nitric oxide + H2O = Fe(II)-heme b-[protein] + nitrite + 2 H(+). It carries out the reaction H2O2 + AH2 = A + 2 H2O. Monomeric heme protein which primary function is to store oxygen and facilitate its diffusion within muscle tissues. Reversibly binds oxygen through a pentacoordinated heme iron and enables its timely and efficient release as needed during periods of heightened demand. Depending on the oxidative conditions of tissues and cells, and in addition to its ability to bind oxygen, it also has a nitrite reductase activity whereby it regulates the production of bioactive nitric oxide. Under stress conditions, like hypoxia and anoxia, it also protects cells against reactive oxygen species thanks to its pseudoperoxidase activity. The sequence is that of Myoglobin (MB) from Caretta caretta (Loggerhead sea turtle).